A 307-amino-acid chain; its full sequence is Pseudouridine-5'-phosphate glycosidase (307 aa).

The Proton donor role is filled by Glu-28. 2 residues coordinate substrate: Lys-89 and Val-109. Position 141 (Asp-141) interacts with Mn(2+). Ser-143 to Asp-145 is a substrate binding site. Residue Lys-162 is the Nucleophile of the active site.

Belongs to the pseudouridine-5'-phosphate glycosidase family. Homotrimer. Mn(2+) serves as cofactor.

The catalysed reaction is D-ribose 5-phosphate + uracil = psi-UMP + H2O. Its function is as follows. Catalyzes the reversible cleavage of pseudouridine 5'-phosphate (PsiMP) to ribose 5-phosphate and uracil. Functions biologically in the cleavage direction, as part of a pseudouridine degradation pathway. In Nocardioides sp. (strain ATCC BAA-499 / JS614), this protein is Pseudouridine-5'-phosphate glycosidase.